A 94-amino-acid polypeptide reads, in one-letter code: Co-chaperonin GroES (94 aa).

It belongs to the GroES chaperonin family. Heptamer of 7 subunits arranged in a ring. Interacts with the chaperonin GroEL.

The protein resides in the cytoplasm. Functionally, together with the chaperonin GroEL, plays an essential role in assisting protein folding. The GroEL-GroES system forms a nano-cage that allows encapsulation of the non-native substrate proteins and provides a physical environment optimized to promote and accelerate protein folding. GroES binds to the apical surface of the GroEL ring, thereby capping the opening of the GroEL channel. The sequence is that of Co-chaperonin GroES from Pediococcus pentosaceus (strain ATCC 25745 / CCUG 21536 / LMG 10740 / 183-1w).